A 347-amino-acid chain; its full sequence is ATPase GET3 (347 aa).

26-33 (KGGVGKTT) contributes to the ATP binding site. Asp57 is an active-site residue. Positions 241 and 268 each coordinate ATP. Residues Cys279 and Cys282 each coordinate Zn(2+).

This sequence belongs to the arsA ATPase family. In terms of assembly, homodimer. Component of the Golgi to ER traffic (GET) complex, which is composed of GET1, GET2 and GET3. Within the complex, GET1 and GET2 form a heterotetramer which is stabilized by phosphatidylinositol binding and which binds to the GET3 homodimer. Interacts with the chloride channel protein GEF1.

The protein resides in the cytoplasm. The protein localises to the endoplasmic reticulum. Its subcellular location is the golgi apparatus. ATPase required for the post-translational delivery of tail-anchored (TA) proteins to the endoplasmic reticulum. Recognizes and selectively binds the transmembrane domain of TA proteins in the cytosol. This complex then targets to the endoplasmic reticulum by membrane-bound receptors GET1 and GET2, where the tail-anchored protein is released for insertion. This process is regulated by ATP binding and hydrolysis. ATP binding drives the homodimer towards the closed dimer state, facilitating recognition of newly synthesized TA membrane proteins. ATP hydrolysis is required for insertion. Subsequently, the homodimer reverts towards the open dimer state, lowering its affinity for the GET1-GET2 receptor, and returning it to the cytosol to initiate a new round of targeting. Cooperates with the HDEL receptor ERD2 to mediate the ATP-dependent retrieval of resident ER proteins that contain a C-terminal H-D-E-L retention signal from the Golgi to the ER. Involved in low-level resistance to the oxyanions arsenite and arsenate, and in heat tolerance. The chain is ATPase GET3 from Meyerozyma guilliermondii (strain ATCC 6260 / CBS 566 / DSM 6381 / JCM 1539 / NBRC 10279 / NRRL Y-324) (Yeast).